A 419-amino-acid polypeptide reads, in one-letter code: tRNA(Ile)-lysidine synthase (419 aa).

25–30 (SGGIDS) serves as a coordination point for ATP.

The protein belongs to the tRNA(Ile)-lysidine synthase family.

The protein resides in the cytoplasm. It catalyses the reaction cytidine(34) in tRNA(Ile2) + L-lysine + ATP = lysidine(34) in tRNA(Ile2) + AMP + diphosphate + H(+). In terms of biological role, ligates lysine onto the cytidine present at position 34 of the AUA codon-specific tRNA(Ile) that contains the anticodon CAU, in an ATP-dependent manner. Cytidine is converted to lysidine, thus changing the amino acid specificity of the tRNA from methionine to isoleucine. The chain is tRNA(Ile)-lysidine synthase from Actinobacillus pleuropneumoniae serotype 7 (strain AP76).